Reading from the N-terminus, the 75-residue chain is Veswaprin-c (75 aa).

Positions 1-24 are cleaved as a signal peptide; it reads MSSGGLLLLLGLLTLWAELTPVSS. The 46-residue stretch at 27-72 folds into the WAP domain; sequence RPKKPGLCPPRPQKPPCVRECKNDWRCPGERKCCRYGCIYECRDPI. Intrachain disulfides connect Cys34–Cys60, Cys43–Cys64, Cys47–Cys59, and Cys53–Cys68.

Belongs to the venom waprin family. In terms of tissue distribution, expressed by the venom gland.

It localises to the secreted. Its function is as follows. Damages membranes of susceptible bacteria. Has no hemolytic activity. Not toxic to mice. Does not inhibit the proteinases elastase and cathepsin G. The protein is Veswaprin-c of Demansia vestigiata (Lesser black whip snake).